A 229-amino-acid polypeptide reads, in one-letter code: Cytochrome c oxidase subunit 2 (229 aa).

The Mitochondrial intermembrane segment spans residues 1–14 (MANHLQFNFQDATS). A helical membrane pass occupies residues 15–45 (PLMQELVKFHDHSLTILFFISALILYVLMMT). Residues 46–59 (SLSKLTNKNILDSQ) are Mitochondrial matrix-facing. A helical membrane pass occupies residues 60 to 87 (EIEMVWTVIPAFILIMLALPSIQILYLM). The Mitochondrial intermembrane portion of the chain corresponds to 88-229 (DEIASPDITI…FESWIIKLSL (142 aa)). Positions 162, 197, 199, 201, 205, and 208 each coordinate Cu cation. Position 199 (E199) interacts with Mg(2+).

This sequence belongs to the cytochrome c oxidase subunit 2 family. As to quaternary structure, component of the cytochrome c oxidase (complex IV, CIV), a multisubunit enzyme composed of 14 subunits. The complex is composed of a catalytic core of 3 subunits MT-CO1, MT-CO2 and MT-CO3, encoded in the mitochondrial DNA, and 11 supernumerary subunits COX4I, COX5A, COX5B, COX6A, COX6B, COX6C, COX7A, COX7B, COX7C, COX8 and NDUFA4, which are encoded in the nuclear genome. The complex exists as a monomer or a dimer and forms supercomplexes (SCs) in the inner mitochondrial membrane with NADH-ubiquinone oxidoreductase (complex I, CI) and ubiquinol-cytochrome c oxidoreductase (cytochrome b-c1 complex, complex III, CIII), resulting in different assemblies (supercomplex SCI(1)III(2)IV(1) and megacomplex MCI(2)III(2)IV(2)). Found in a complex with TMEM177, COA6, COX18, COX20, SCO1 and SCO2. Interacts with TMEM177 in a COX20-dependent manner. Interacts with COX20. Interacts with COX16. Cu cation serves as cofactor.

It is found in the mitochondrion inner membrane. The catalysed reaction is 4 Fe(II)-[cytochrome c] + O2 + 8 H(+)(in) = 4 Fe(III)-[cytochrome c] + 2 H2O + 4 H(+)(out). Its function is as follows. Component of the cytochrome c oxidase, the last enzyme in the mitochondrial electron transport chain which drives oxidative phosphorylation. The respiratory chain contains 3 multisubunit complexes succinate dehydrogenase (complex II, CII), ubiquinol-cytochrome c oxidoreductase (cytochrome b-c1 complex, complex III, CIII) and cytochrome c oxidase (complex IV, CIV), that cooperate to transfer electrons derived from NADH and succinate to molecular oxygen, creating an electrochemical gradient over the inner membrane that drives transmembrane transport and the ATP synthase. Cytochrome c oxidase is the component of the respiratory chain that catalyzes the reduction of oxygen to water. Electrons originating from reduced cytochrome c in the intermembrane space (IMS) are transferred via the dinuclear copper A center (CU(A)) of subunit 2 and heme A of subunit 1 to the active site in subunit 1, a binuclear center (BNC) formed by heme A3 and copper B (CU(B)). The BNC reduces molecular oxygen to 2 water molecules using 4 electrons from cytochrome c in the IMS and 4 protons from the mitochondrial matrix. This is Cytochrome c oxidase subunit 2 (MT-CO2) from Myxine glutinosa (Atlantic hagfish).